The following is a 173-amino-acid chain: 3-hydroxydecanoyl-[acyl-carrier-protein] dehydratase (173 aa).

H71 is an active-site residue.

It belongs to the thioester dehydratase family. FabA subfamily. Homodimer.

The protein resides in the cytoplasm. The enzyme catalyses a (3R)-hydroxyacyl-[ACP] = a (2E)-enoyl-[ACP] + H2O. It carries out the reaction (3R)-hydroxydecanoyl-[ACP] = (2E)-decenoyl-[ACP] + H2O. It catalyses the reaction (2E)-decenoyl-[ACP] = (3Z)-decenoyl-[ACP]. Its pathway is lipid metabolism; fatty acid biosynthesis. Functionally, necessary for the introduction of cis unsaturation into fatty acids. Catalyzes the dehydration of (3R)-3-hydroxydecanoyl-ACP to E-(2)-decenoyl-ACP and then its isomerization to Z-(3)-decenoyl-ACP. Can catalyze the dehydratase reaction for beta-hydroxyacyl-ACPs with saturated chain lengths up to 16:0, being most active on intermediate chain length. The chain is 3-hydroxydecanoyl-[acyl-carrier-protein] dehydratase from Bradyrhizobium diazoefficiens (strain JCM 10833 / BCRC 13528 / IAM 13628 / NBRC 14792 / USDA 110).